The sequence spans 105 residues: Large ribosomal subunit protein eL42 (105 aa).

A disordered region spans residues 23–61 (KVTQYKKGKESKFAQGRRRYDRKQSGFGGQTKPIFRKKA).

The protein belongs to the eukaryotic ribosomal protein eL42 family.

The chain is Large ribosomal subunit protein eL42 from Caenorhabditis elegans.